A 455-amino-acid polypeptide reads, in one-letter code: Bifunctional protein GlmU (455 aa).

Residues 1–228 (MYKCALVLAA…FEETIGVNSR (228 aa)) are pyrophosphorylase. Residues 8-11 (LAAG), Lys-22, Gln-73, and 78-79 (GT) contribute to the UDP-N-acetyl-alpha-D-glucosamine site. Asp-103 serves as a coordination point for Mg(2+). The UDP-N-acetyl-alpha-D-glucosamine site is built by Gly-140, Glu-154, Asn-169, and Asn-226. Asn-226 contacts Mg(2+). Residues 229–249 (AQLAQAEEILKDRINLKHMEN) are linker. An N-acetyltransferase region spans residues 250–455 (GVTLIDPKTT…GWVDKKGLKK (206 aa)). Positions 331 and 349 each coordinate UDP-N-acetyl-alpha-D-glucosamine. His-361 functions as the Proton acceptor in the catalytic mechanism. UDP-N-acetyl-alpha-D-glucosamine contacts are provided by Tyr-364 and Asn-375. Acetyl-CoA-binding positions include 384–385 (NY), Ala-421, and Arg-438.

In the N-terminal section; belongs to the N-acetylglucosamine-1-phosphate uridyltransferase family. This sequence in the C-terminal section; belongs to the transferase hexapeptide repeat family. Homotrimer. Mg(2+) serves as cofactor.

It localises to the cytoplasm. It catalyses the reaction alpha-D-glucosamine 1-phosphate + acetyl-CoA = N-acetyl-alpha-D-glucosamine 1-phosphate + CoA + H(+). The catalysed reaction is N-acetyl-alpha-D-glucosamine 1-phosphate + UTP + H(+) = UDP-N-acetyl-alpha-D-glucosamine + diphosphate. Its pathway is nucleotide-sugar biosynthesis; UDP-N-acetyl-alpha-D-glucosamine biosynthesis; N-acetyl-alpha-D-glucosamine 1-phosphate from alpha-D-glucosamine 6-phosphate (route II): step 2/2. The protein operates within nucleotide-sugar biosynthesis; UDP-N-acetyl-alpha-D-glucosamine biosynthesis; UDP-N-acetyl-alpha-D-glucosamine from N-acetyl-alpha-D-glucosamine 1-phosphate: step 1/1. It participates in bacterial outer membrane biogenesis; LPS lipid A biosynthesis. In terms of biological role, catalyzes the last two sequential reactions in the de novo biosynthetic pathway for UDP-N-acetylglucosamine (UDP-GlcNAc). The C-terminal domain catalyzes the transfer of acetyl group from acetyl coenzyme A to glucosamine-1-phosphate (GlcN-1-P) to produce N-acetylglucosamine-1-phosphate (GlcNAc-1-P), which is converted into UDP-GlcNAc by the transfer of uridine 5-monophosphate (from uridine 5-triphosphate), a reaction catalyzed by the N-terminal domain. The polypeptide is Bifunctional protein GlmU (Clostridium botulinum (strain Eklund 17B / Type B)).